Reading from the N-terminus, the 431-residue chain is Keratin, type I cytoskeletal 40 (431 aa).

Residues methionine 1 to glutamate 89 form a head region. Residues glutamate 89 to leucine 400 enclose the IF rod domain. Residues lysine 90–glutamine 124 form a coil 1A region. Residues cysteine 125–aspartate 135 form a linker 1 region. The tract at residues tyrosine 136–glycine 236 is coil 1B. The tract at residues glutamine 237–threonine 252 is linker 12. Positions aspartate 253–glutamate 396 are coil 2. Positions aspartate 397 to proline 431 are tail.

It belongs to the intermediate filament family. Heterotetramer of two type I and two type II keratins.

In terms of biological role, may play a role in late hair differentiation. This is Keratin, type I cytoskeletal 40 (KRT40) from Bos taurus (Bovine).